The following is a 582-amino-acid chain: ATP-dependent lipid A-core flippase (582 aa).

Helical transmembrane passes span 16–36, 64–84, 153–173, 253–273, and 275–295; these read LWPT…ALIL, LLWM…TSYI, IIGL…ILVV, PIIQ…ASFP, and VMDS…IALM. The ABC transmembrane type-1 domain occupies 28–310; sequence IVAGIALILN…LTNVNAQFQR (283 aa). The region spanning 342-578 is the ABC transporter domain; it reads LEFRNVTFTY…HGVYAQLHKM (237 aa). 376–383 is an ATP binding site; it reads GRSGSGKS.

It belongs to the ABC transporter superfamily. Lipid exporter (TC 3.A.1.106) family. Homodimer.

Its subcellular location is the cell inner membrane. The enzyme catalyses ATP + H2O + lipid A-core oligosaccharideSide 1 = ADP + phosphate + lipid A-core oligosaccharideSide 2.. Its function is as follows. Involved in lipopolysaccharide (LPS) biosynthesis. Translocates lipid A-core from the inner to the outer leaflet of the inner membrane. Transmembrane domains (TMD) form a pore in the inner membrane and the ATP-binding domain (NBD) is responsible for energy generation. The polypeptide is ATP-dependent lipid A-core flippase (Salmonella paratyphi A (strain ATCC 9150 / SARB42)).